Here is a 1691-residue protein sequence, read N- to C-terminus: Protein TIC 214 (1691 aa).

The next 6 membrane-spanning stretches (helical) occupy residues 19-39 (MLLGFYYGLLTTLPVGPSQIL), 60-80 (VLAQLITASSIYCSPIYLLLL), 84-104 (LLTIVAIPYTLLFCLVIKDFP), 123-143 (LFLISFFFQILNPIMLPNSVL), 158-178 (TVFMVSTFMGWLTGQAAFNFF), and 200-220 (FIYATFSIVSISYAVAYLGRA). Positions 819-839 (EKQHTLQRKHKEIGSKSRELK) are disordered.

Belongs to the TIC214 family. Part of the Tic complex.

The protein localises to the plastid. It localises to the chloroplast inner membrane. Involved in protein precursor import into chloroplasts. May be part of an intermediate translocation complex acting as a protein-conducting channel at the inner envelope. This chain is Protein TIC 214, found in Adiantum capillus-veneris (Maidenhair fern).